A 128-amino-acid chain; its full sequence is Spore germination protein 1/2/3-related protein (128 aa).

The first 26 residues, 1-26 (MNIRNTLVLLVSTVLVLMSCSIGCYA), serve as a signal peptide directing secretion. N-linked (GlcNAc...) asparagine glycosylation is found at Asn55 and Asn119.

This sequence belongs to the Dictyostelium gerABC family.

Its subcellular location is the secreted. This is Spore germination protein 1/2/3-related protein from Dictyostelium discoideum (Social amoeba).